The following is a 92-amino-acid chain: MDWQGQKLVEQLMQILLVISGVVAVVVGYTTESFRTMMLIYAGGVVLTTLVTVPNWPFYNLHPLKWLDPSEAEKHPKPEVVSVASKKKFSKK.

The Cytoplasmic segment spans residues 1–12; it reads MDWQGQKLVEQL. Residues 13 to 30 form a helical membrane-spanning segment; the sequence is MQILLVISGVVAVVVGYT. At 31–36 the chain is on the lumenal side; that stretch reads TESFRT. Residues 37–59 form a helical membrane-spanning segment; the sequence is MMLIYAGGVVLTTLVTVPNWPFY. At 60–92 the chain is on the cytoplasmic side; sequence NLHPLKWLDPSEAEKHPKPEVVSVASKKKFSKK. The disordered stretch occupies residues 73 to 92; sequence EKHPKPEVVSVASKKKFSKK.

The protein belongs to the SPCS1 family. In terms of assembly, component of the signal peptidase complex (SPC) composed of a catalytic subunit SEC11 and three accessory subunits SPCS1, SPCS2 and SPCS3. The complex induces a local thinning of the ER membrane which is used to measure the length of the signal peptide (SP) h-region of protein substrates. This ensures the selectivity of the complex towards h-regions shorter than 18-20 amino acids.

It localises to the endoplasmic reticulum membrane. Component of the signal peptidase complex (SPC) which catalyzes the cleavage of N-terminal signal sequences from nascent proteins as they are translocated into the lumen of the endoplasmic reticulum. Dispensable for SPC enzymatic activity. The polypeptide is Signal peptidase complex subunit 1 (Arabidopsis thaliana (Mouse-ear cress)).